The sequence spans 622 residues: Cilia- and flagella-associated protein 206 (622 aa).

Residues 570-592 are disordered; the sequence is SQVYPPKDTSTQSMREDSTGVPR.

This sequence belongs to the CFAP206 family.

Its subcellular location is the cytoplasm. The protein localises to the cytoskeleton. It localises to the cilium axoneme. The protein resides in the cilium basal body. Essential for sperm motility and is involved in the regulation of the beating frequency of motile cilia on the epithelial cells of the respiratory tract. Required for the establishment of radial spokes in sperm flagella. This is Cilia- and flagella-associated protein 206 from Homo sapiens (Human).